A 466-amino-acid chain; its full sequence is Replicative helicase loading/DNA remodeling protein DnaB (466 aa).

The DDBH1 stretch occupies residues R3–Q113. The interval E200–E292 is DDBH2-1. The tract at residues V293–N401 is DDBH2-2.

The protein belongs to the DnaB/DnaD family. In terms of assembly, homotetramer, higher-order oligomers are induced by ssDNA. The DNA replisome assembles sequentially on oriC in this order; DnaA, DnaD, DnaB, DnaI-DnaC helicase. Part of the replication restart primosome, PriA binds first, then DnaD and subsequently DnaB bind.

Helps DnaI load the DnaC replicative helicase onto single-stranded (ss)DNA. During DNA replication from the origin of replication (oriC) in the DNA replisome, DnaB and DnaD are required after DnaA and before subsequent helicase DnaC loading. Component of the replication restart primosome, which reloads the replicative helicase on sites other than oriC. Essential for replication initiation of the chromosome and plasmids. Remodels DNA, laterally compacts supercoiled plasmid and linear DNA. Binds supercoiled, nicked and linear double-stranded (ds)DNA and phage phiX174 single-stranded (ss)DNA; phiX174 ssDNA is a better substrate than for B.subtilis. No binding to phage M13 ssDNA although it induces oligomers. This chain is Replicative helicase loading/DNA remodeling protein DnaB, found in Staphylococcus aureus (strain NCTC 8325 / PS 47).